A 321-amino-acid chain; its full sequence is Glycerol-3-phosphate phosphatase (321 aa).

Aspartate 34 serves as the catalytic Nucleophile. The Mg(2+) site is built by aspartate 34, aspartate 36, and aspartate 260. Aspartate 36 serves as the catalytic Proton donor.

This sequence belongs to the HAD-like hydrolase superfamily. CbbY/CbbZ/Gph/YieH family. In terms of assembly, homodimer. The cofactor is Mg(2+). As to expression, expression was confirmed in liver, adipose tissue, testis and pancreatic islet.

The enzyme catalyses O-phospho-L-tyrosyl-[protein] + H2O = L-tyrosyl-[protein] + phosphate. It catalyses the reaction sn-glycerol 1-phosphate + H2O = glycerol + phosphate. It carries out the reaction sn-glycerol 3-phosphate + H2O = glycerol + phosphate. Glycerol-3-phosphate phosphatase hydrolyzing glycerol-3-phosphate into glycerol. Thereby, regulates the cellular levels of glycerol-3-phosphate a metabolic intermediate of glucose, lipid and energy metabolism. Was also shown to have a 2-phosphoglycolate phosphatase activity and a tyrosine-protein phosphatase activity. However, their physiological relevance is unclear. In vitro, also has a phosphatase activity toward ADP, ATP, GDP and GTP. The chain is Glycerol-3-phosphate phosphatase from Rattus norvegicus (Rat).